The following is a 552-amino-acid chain: Dihydroxy-acid dehydratase (552 aa).

Asp78 is a Mg(2+) binding site. Cys119 provides a ligand contact to [2Fe-2S] cluster. Mg(2+) is bound by residues Asp120 and Lys121. Residue Lys121 is modified to N6-carboxylysine. Position 191 (Cys191) interacts with [2Fe-2S] cluster. A Mg(2+)-binding site is contributed by Glu442. The active-site Proton acceptor is Ser468.

It belongs to the IlvD/Edd family. In terms of assembly, homodimer. The cofactor is [2Fe-2S] cluster. Requires Mg(2+) as cofactor.

The enzyme catalyses (2R)-2,3-dihydroxy-3-methylbutanoate = 3-methyl-2-oxobutanoate + H2O. The catalysed reaction is (2R,3R)-2,3-dihydroxy-3-methylpentanoate = (S)-3-methyl-2-oxopentanoate + H2O. It functions in the pathway amino-acid biosynthesis; L-isoleucine biosynthesis; L-isoleucine from 2-oxobutanoate: step 3/4. It participates in amino-acid biosynthesis; L-valine biosynthesis; L-valine from pyruvate: step 3/4. Its function is as follows. Functions in the biosynthesis of branched-chain amino acids. Catalyzes the dehydration of (2R,3R)-2,3-dihydroxy-3-methylpentanoate (2,3-dihydroxy-3-methylvalerate) into 2-oxo-3-methylpentanoate (2-oxo-3-methylvalerate) and of (2R)-2,3-dihydroxy-3-methylbutanoate (2,3-dihydroxyisovalerate) into 2-oxo-3-methylbutanoate (2-oxoisovalerate), the penultimate precursor to L-isoleucine and L-valine, respectively. The chain is Dihydroxy-acid dehydratase from Clostridium botulinum (strain Alaska E43 / Type E3).